A 301-amino-acid chain; its full sequence is tRNA (guanine-N(7)-)-methyltransferase (301 aa).

The tract at residues 1 to 26 is disordered; that stretch reads MSETPDSPRPVTPGSQASFGTYGGRP. Residues Glu85, Glu110, Asn137, and Asp160 each contribute to the S-adenosyl-L-methionine site. Residue Asp160 is part of the active site. Substrate contacts are provided by Lys164 and Asp196. The disordered stretch occupies residues 244 to 270; that stretch reads APVREGRAPVSTEHTGPNEGVDEEGGW. 280–283 is a binding site for substrate; it reads TSFE.

Belongs to the class I-like SAM-binding methyltransferase superfamily. TrmB family.

It carries out the reaction guanosine(46) in tRNA + S-adenosyl-L-methionine = N(7)-methylguanosine(46) in tRNA + S-adenosyl-L-homocysteine. The protein operates within tRNA modification; N(7)-methylguanine-tRNA biosynthesis. In terms of biological role, catalyzes the formation of N(7)-methylguanine at position 46 (m7G46) in tRNA. The chain is tRNA (guanine-N(7)-)-methyltransferase from Paenarthrobacter aurescens (strain TC1).